The primary structure comprises 342 residues: Ribosomal RNA small subunit methyltransferase C (342 aa).

Belongs to the methyltransferase superfamily. RsmC family. As to quaternary structure, monomer.

The protein localises to the cytoplasm. It carries out the reaction guanosine(1207) in 16S rRNA + S-adenosyl-L-methionine = N(2)-methylguanosine(1207) in 16S rRNA + S-adenosyl-L-homocysteine + H(+). Specifically methylates the guanine in position 1207 of 16S rRNA in the 30S particle. This chain is Ribosomal RNA small subunit methyltransferase C, found in Hahella chejuensis (strain KCTC 2396).